Reading from the N-terminus, the 708-residue chain is Polyribonucleotide nucleotidyltransferase (708 aa).

Mg(2+) is bound by residues aspartate 486 and aspartate 492. Positions proline 553–isoleucine 612 constitute a KH domain. Residues glycine 622–lysine 690 form the S1 motif domain.

This sequence belongs to the polyribonucleotide nucleotidyltransferase family. Mg(2+) is required as a cofactor.

It is found in the cytoplasm. The enzyme catalyses RNA(n+1) + phosphate = RNA(n) + a ribonucleoside 5'-diphosphate. Its function is as follows. Involved in mRNA degradation. Catalyzes the phosphorolysis of single-stranded polyribonucleotides processively in the 3'- to 5'-direction. This chain is Polyribonucleotide nucleotidyltransferase, found in Nitrosomonas europaea (strain ATCC 19718 / CIP 103999 / KCTC 2705 / NBRC 14298).